We begin with the raw amino-acid sequence, 88 residues long: Small ribosomal subunit protein uS17 (88 aa).

It belongs to the universal ribosomal protein uS17 family. In terms of assembly, part of the 30S ribosomal subunit.

Its function is as follows. One of the primary rRNA binding proteins, it binds specifically to the 5'-end of 16S ribosomal RNA. This chain is Small ribosomal subunit protein uS17, found in Prochlorococcus marinus (strain MIT 9303).